A 520-amino-acid polypeptide reads, in one-letter code: Peptide chain release factor 3 (520 aa).

Residues 8–273 form the tr-type G domain; sequence EIRKTFAIIS…AYVDHAPMPS (266 aa). Residues 17-24, 85-89, and 139-142 each bind GTP; these read SHPDAGKT, DTPGH, and NKLD.

Belongs to the TRAFAC class translation factor GTPase superfamily. Classic translation factor GTPase family. PrfC subfamily.

Its subcellular location is the cytoplasm. Its function is as follows. Increases the formation of ribosomal termination complexes and stimulates activities of RF-1 and RF-2. It binds guanine nucleotides and has strong preference for UGA stop codons. It may interact directly with the ribosome. The stimulation of RF-1 and RF-2 is significantly reduced by GTP and GDP, but not by GMP. This chain is Peptide chain release factor 3, found in Macrococcus caseolyticus (strain JCSC5402) (Macrococcoides caseolyticum).